A 436-amino-acid polypeptide reads, in one-letter code: UPF0597 protein YhaM (436 aa).

The protein belongs to the UPF0597 family.

The protein is UPF0597 protein YhaM of Escherichia coli O7:K1 (strain IAI39 / ExPEC).